The chain runs to 230 residues: Somatolactin (230 aa).

The signal sequence occupies residues 1–25 (MHTKVLQQGLWALLLWPHLFTVSVP). Intrachain disulfides connect Cys28–Cys38, Cys88–Cys204, and Cys221–Cys229. Asn144 carries an N-linked (GlcNAc...) asparagine glycan.

This sequence belongs to the somatotropin/prolactin family.

It is found in the secreted. Selectively regulates proliferation and morphogenesis of neural-crest derived pigment cells. The protein is Somatolactin of Oryzias latipes (Japanese rice fish).